Consider the following 155-residue polypeptide: Ribosome maturation factor RimP (155 aa).

Belongs to the RimP family.

It is found in the cytoplasm. Required for maturation of 30S ribosomal subunits. The sequence is that of Ribosome maturation factor RimP from Lachnoclostridium phytofermentans (strain ATCC 700394 / DSM 18823 / ISDg) (Clostridium phytofermentans).